The primary structure comprises 346 residues: Phosphoribosylformylglycinamidine cyclo-ligase (346 aa).

This sequence belongs to the AIR synthase family.

The protein resides in the cytoplasm. It carries out the reaction 2-formamido-N(1)-(5-O-phospho-beta-D-ribosyl)acetamidine + ATP = 5-amino-1-(5-phospho-beta-D-ribosyl)imidazole + ADP + phosphate + H(+). The protein operates within purine metabolism; IMP biosynthesis via de novo pathway; 5-amino-1-(5-phospho-D-ribosyl)imidazole from N(2)-formyl-N(1)-(5-phospho-D-ribosyl)glycinamide: step 2/2. The protein is Phosphoribosylformylglycinamidine cyclo-ligase of Bacillus anthracis (strain A0248).